Consider the following 297-residue polypeptide: Thiosulfate sulfurtransferase (297 aa).

An N6-acetyllysine; alternate modification is found at Lys14. The residue at position 14 (Lys14) is an N6-succinyllysine; alternate. A Rhodanese 1 domain is found at 25-143 (VGPSLRVLDA…WLKEGHPVTS (119 aa)). An O-linked (GlcNAc) serine glycan is attached at Ser35. Position 38 is a phosphoserine (Ser38). Lys136 bears the N6-acetyllysine; alternate mark. Position 136 is an N6-succinyllysine; alternate (Lys136). The segment at 144 to 159 (EPSRPEPAVFKATLNR) is hinge. Lys163 carries the N6-acetyllysine modification. Positions 173 to 288 (QSKRFQLVDS…WFRRAPPETR (116 aa)) constitute a Rhodanese 2 domain. Lys175 carries the N6-acetyllysine; alternate modification. An N6-succinyllysine; alternate modification is found at Lys175. A substrate-binding site is contributed by Arg187. Lys224 carries the post-translational modification N6-acetyllysine; alternate. An N6-succinyllysine; alternate modification is found at Lys224. Lys236 is subject to N6-acetyllysine. Residue Lys237 is modified to N6-acetyllysine; alternate. An N6-succinyllysine; alternate modification is found at Lys237. The active-site Cysteine persulfide intermediate is the Cys248. Lys250 provides a ligand contact to substrate.

In terms of assembly, monomer. Expressed in numerous tissues.

The protein resides in the mitochondrion matrix. It carries out the reaction thiosulfate + hydrogen cyanide = thiocyanate + sulfite + 2 H(+). Functionally, together with MRPL18, acts as a mitochondrial import factor for the cytosolic 5S rRNA. Only the nascent unfolded cytoplasmic form is able to bind to the 5S rRNA. Involved in the formation of iron-sulfur complexes, cyanide detoxification or modification of sulfur-containing enzymes. Other thiol compounds, besides cyanide, can act as sulfur ion acceptors. Also has weak mercaptopyruvate sulfurtransferase (MST) activity. The chain is Thiosulfate sulfurtransferase (Tst) from Rattus norvegicus (Rat).